We begin with the raw amino-acid sequence, 138 residues long: Small ribosomal subunit protein uS11c (138 aa).

It belongs to the universal ribosomal protein uS11 family. As to quaternary structure, part of the 30S ribosomal subunit.

Its subcellular location is the plastid. It localises to the chloroplast. In Morus indica (Mulberry), this protein is Small ribosomal subunit protein uS11c.